The chain runs to 192 residues: Cytochrome c4 (192 aa).

2 Cytochrome c domains span residues 12–90 (GDPQ…ATQP) and 99–191 (ELAS…QGLS). Positions 25, 28, 29, 120, 123, and 124 each coordinate heme c.

Binds 2 heme c groups covalently per subunit.

Its subcellular location is the periplasm. Its function is as follows. Diheme, high potential cytochrome c believed to be an intermediate electron donor in an anaerobic electron transport chain. The protein is Cytochrome c4 of Thiocapsa roseopersicina.